Reading from the N-terminus, the 462-residue chain is Metacaspase-1 (462 aa).

A compositionally biased stretch (pro residues) spans 1–21; the sequence is MSYYPPPSGYPGGPPAYPPPQ. Residues 1–150 are disordered; sequence MSYYPPPSGY…PPPPSGSVAF (150 aa). The segment covering 22-33 has biased composition (low complexity); sequence QQQQQQQQYPSY. Pro residues-rich tracts occupy residues 49–69 and 77–102; these read PSYP…PPHS and SPQP…PPSP. Catalysis depends on residues H253 and C309.

Belongs to the peptidase C14B family.

Functionally, involved in cell death (apoptosis). This Coccidioides immitis (strain RS) (Valley fever fungus) protein is Metacaspase-1 (MCA1).